The primary structure comprises 274 residues: NH(3)-dependent NAD(+) synthetase (274 aa).

46 to 53 (GISGGQDS) provides a ligand contact to ATP. A Mg(2+)-binding site is contributed by D52. R140 serves as a coordination point for deamido-NAD(+). An ATP-binding site is contributed by T160. E165 lines the Mg(2+) pocket. Residues K173 and D180 each coordinate deamido-NAD(+). K189 and T211 together coordinate ATP. 260 to 261 (HK) is a binding site for deamido-NAD(+).

This sequence belongs to the NAD synthetase family. In terms of assembly, homodimer.

It catalyses the reaction deamido-NAD(+) + NH4(+) + ATP = AMP + diphosphate + NAD(+) + H(+). The protein operates within cofactor biosynthesis; NAD(+) biosynthesis; NAD(+) from deamido-NAD(+) (ammonia route): step 1/1. Catalyzes the ATP-dependent amidation of deamido-NAD to form NAD. Uses ammonia as a nitrogen source. In Streptococcus suis (strain 05ZYH33), this protein is NH(3)-dependent NAD(+) synthetase.